We begin with the raw amino-acid sequence, 358 residues long: Homer protein homolog 3 (358 aa).

The tract at residues 1-80 (MSTAREQPIF…TKTSQKFGQW (80 aa)) is required for interaction with NFATC2. The WH1 domain maps to 1-113 (MSTAREQPIF…EKFQEVKEAA (113 aa)). The stretch at 95–122 (SEQQLTQFAEKFQEVKEAARLAREKSQD) forms a coiled coil. Phosphoserine occurs at positions 120 and 158. 2 disordered regions span residues 137–168 (QVPP…TERE) and 239–296 (AEPV…QVQD). Residues 190–355 (ALQDSNQRLA…LREGLARLAE (166 aa)) are a coiled coil. The span at 257 to 267 (LEARVQTKDQE) shows a compositional bias: basic and acidic residues. Residues 268-277 (IQTLKNQSTG) are compositionally biased toward polar residues. Residues 280-290 (EAPDTAEREET) show a composition bias toward basic and acidic residues.

The protein belongs to the Homer family. Tetramer. Encodes coiled-coil structures that mediate homo- and heteromultimerization. Interacts with NFATC2; interaction is calcium independent; interaction competes with PPP3CA for NFATC2 binding; interaction is reduced by AKT activation. Interacts with NFATC1 and NFATC4. Interacts with SHANK1; forms a high-order complex at least composed of SHANK1 and HOMER3; the complex formation is regulated by CAMK2A-mediated phosphorylation.

It localises to the cytoplasm. The protein localises to the postsynaptic density. The protein resides in the synapse. In terms of biological role, postsynaptic density scaffolding protein. Binds and cross-links cytoplasmic regions of GRM1, GRM5, ITPR1, DNM3, RYR1, RYR2, SHANK1 and SHANK3. By physically linking GRM1 and GRM5 with ER-associated ITPR1 receptors, it aids the coupling of surface receptors to intracellular calcium release. Negatively regulates T cell activation by inhibiting the calcineurin-NFAT pathway. Acts by competing with calcineurin/PPP3CA for NFAT protein binding, hence preventing NFAT activation by PPP3CA. In Rattus norvegicus (Rat), this protein is Homer protein homolog 3.